The following is a 218-amino-acid chain: MERQGVDVPHVKCKDQEPQPLGESKEHPRWEENCEEEAGGGPASASCQLTVLEGKSGLYFSSLDSSIDILQKRAQELIENINKSRQKDHALMTNFRNSLKTKVSDLTEKLEERIYQIYNDHNKIIQEKLQEFTQKMAKISHLETELKQVCHSVETVYKDLCLQPEQSLRLRWGPDHSRGKSPPRPGNSQPPDVFVSSVAETTSQATASEVQTNRDGEC.

The span at methionine 1–glutamate 32 shows a compositional bias: basic and acidic residues. The interval methionine 1 to proline 42 is disordered. A coiled-coil region spans residues serine 61 to lysine 87. A disordered region spans residues arginine 171–cysteine 218. Over residues valine 198–glutamine 211 the composition is skewed to polar residues.

It belongs to the SYCE family. As to quaternary structure, homodimer. Found in a complex with SYCP1 and SYCE1. Interacts with SYCP1, SYCE1 and SYCE3. Interacts with TEX12.

The protein resides in the nucleus. It is found in the chromosome. Its function is as follows. Major component of the transverse central element of synaptonemal complexes (SCS), formed between homologous chromosomes during meiotic prophase. Requires SYCP1 in order to be incorporated into the central element. May have a role in the synaptonemal complex assembly, stabilization and recombination. This chain is Synaptonemal complex central element protein 2 (SYCE2), found in Homo sapiens (Human).